The primary structure comprises 278 residues: MSERKAINKYYPPDYNPLEAEKLSRKMAKKLKTMNKSHASIRLMTPFSMRCLECNEYIPKSRKFNGKKELLKEKYLDSIKIYRLTISCPRCANSIAFRTDPGNSDYVMEVGGVRNYVPQKPNDDLNAKTAVESIDETLQRLVREKEMEQNEKMGIKEQADDKMDLLEKRLAKIQQEQEDDEELENLRKKNLEMSQRAEMINRSKHAQQEKAVTTDDLDNLVDQVFDNHRQRTNKPGNNNDEKRTPLFNPTSTKGKIQKKSSVRTNPLGIVIKRGKSLK.

Residues Cys-51, Cys-54, Cys-88, and Cys-91 each coordinate Zn(2+). The interval 228-278 (HRQRTNKPGNNNDEKRTPLFNPTSTKGKIQKKSSVRTNPLGIVIKRGKSLK) is disordered. 2 consecutive short sequence motifs (nuclear localization signal) follow at residues 242 to 258 (KRTP…KIQK) and 260 to 278 (SSVR…KSLK).

This sequence belongs to the CWC16 family. YJU2 subfamily. In terms of assembly, component of the spliceosome. Present in the activated B complex, the catalytically activated B* complex which catalyzes the branching, the catalytic step 1 C complex catalyzing the exon ligation, and the postcatalytic P complex containing the ligated exons (mRNA) and the excised lariat intron. Interacts (via C-terminus) with CLF1. Interacts (via N-terminus) with SYF1. Interacts with U2 snRNA; this interaction is direct. Identified in the CWC complex (or CEF1-associated complex), a spliceosome sub-complex reminiscent of a late-stage spliceosome composed of the U2, U5 and U6 snRNAs and at least BUD13, BUD31, BRR2, CDC40, CEF1, CLF1, CUS1, CWC2, CWC15, CWC21, CWC22, CWC23, CWC24, CWC25, CWC27, ECM2, HSH155, IST3, ISY1, LEA1, MSL1, NTC20, PRP8, PRP9, PRP11, PRP19, PRP21, PRP22, PRP45, PRP46, SLU7, SMB1, SMD1, SMD2, SMD3, SMX2, SMX3, SNT309, SNU114, SPP2, SYF1, SYF2, RSE1 and YJU2.

It is found in the nucleus. Part of the spliceosome which catalyzes two sequential transesterification reactions, first the excision of the non-coding intron from pre-mRNA and then the ligation of the coding exons to form the mature mRNA. Plays a role (via N-terminus) in stabilizing the structure of the spliceosome catalytic core and docking of the branch helix into the active site, producing 5'-exon and lariat intron-3'-intermediates. Further stabilizes spliceosome conformation for 3'-splice site docking (via C-terminus) promoting exon ligation. The protein is Splicing factor YJU2 of Saccharomyces cerevisiae (strain ATCC 204508 / S288c) (Baker's yeast).